A 334-amino-acid polypeptide reads, in one-letter code: O-methyltransferase SfmM3 (334 aa).

S-adenosyl-L-methionine is bound by residues Asp-190 and 216–218 (GDF). His-236 functions as the Proton acceptor in the catalytic mechanism.

This sequence belongs to the class I-like SAM-binding methyltransferase superfamily. Cation-independent O-methyltransferase family. COMT subfamily.

The enzyme catalyses 5-hydroxy-3-methyl-L-tyrosine + S-adenosyl-L-methionine = 5-hydroxy-3-methyl-O-methyl-L-tyrosine + S-adenosyl-L-homocysteine + H(+). It functions in the pathway antibiotic biosynthesis. O-methyltransferase that mediates the methylation of 3-hydroxy-5-methyl-L-tyrosine (3-OH-5-Me-Tyr) into 3-hydroxy-5-methyl-O-methyltyrosine (3-OH-5-Me-OMe-Tyr), a core structure of saframycin A, a potent antitumor antibiotic that belongs to the tetrahydroisoquinoline family. This is O-methyltransferase SfmM3 from Streptomyces lavendulae.